The chain runs to 216 residues: MSAIALGMIIFAYLCGSISSAILVCRVARLPDPRTHGSGNPGATNVLRIGGRTAAVAVLLFDILKGMLPVWIAYLLHIPPLYLGLTAIAACLGHIYPVFFHFKGGKGVATAFGAIAPIGWDLTGLMTGTWLLTVLLSGYSSLGAIVSALIAPFYVWWFKPQFTFPVAMLSCLILMRHHDNIQRLWRGKEGKIWDKLRKKKQKTPAEEAAELEEKED.

The next 5 membrane-spanning stretches (helical) occupy residues 4–24, 56–76, 80–100, 112–132, and 138–158; these read IALG…AILV, VAVL…AYLL, PLYL…PVFF, FGAI…TWLL, and GYSS…VWWF.

This sequence belongs to the PlsY family. Probably interacts with PlsX.

Its subcellular location is the cell inner membrane. It catalyses the reaction an acyl phosphate + sn-glycerol 3-phosphate = a 1-acyl-sn-glycero-3-phosphate + phosphate. Its pathway is lipid metabolism; phospholipid metabolism. In terms of biological role, catalyzes the transfer of an acyl group from acyl-phosphate (acyl-PO(4)) to glycerol-3-phosphate (G3P) to form lysophosphatidic acid (LPA). This enzyme utilizes acyl-phosphate as fatty acyl donor, but not acyl-CoA or acyl-ACP. The chain is Glycerol-3-phosphate acyltransferase from Yersinia pseudotuberculosis serotype O:1b (strain IP 31758).